Consider the following 307-residue polypeptide: Methionyl-tRNA formyltransferase (307 aa).

109-112 (SLLP) serves as a coordination point for (6S)-5,6,7,8-tetrahydrofolate.

This sequence belongs to the Fmt family.

It carries out the reaction L-methionyl-tRNA(fMet) + (6R)-10-formyltetrahydrofolate = N-formyl-L-methionyl-tRNA(fMet) + (6S)-5,6,7,8-tetrahydrofolate + H(+). In terms of biological role, attaches a formyl group to the free amino group of methionyl-tRNA(fMet). The formyl group appears to play a dual role in the initiator identity of N-formylmethionyl-tRNA by promoting its recognition by IF2 and preventing the misappropriation of this tRNA by the elongation apparatus. The protein is Methionyl-tRNA formyltransferase of Dechloromonas aromatica (strain RCB).